We begin with the raw amino-acid sequence, 305 residues long: Acetaldehyde dehydrogenase (305 aa).

NAD(+) is bound at residue 13 to 16 (SGNI). Cysteine 128 functions as the Acyl-thioester intermediate in the catalytic mechanism. NAD(+) contacts are provided by residues 159-167 (SAGPGTRQN) and asparagine 278.

It belongs to the acetaldehyde dehydrogenase family.

The catalysed reaction is acetaldehyde + NAD(+) + CoA = acetyl-CoA + NADH + H(+). This is Acetaldehyde dehydrogenase from Chloroflexus aurantiacus (strain ATCC 29366 / DSM 635 / J-10-fl).